The primary structure comprises 106 residues: MQKIRKGDEVVVITGKDKGKRGTVLRVLPTEGRVVVEGVNVVKKHQKPNPVKGQAGGIVDKTLSIDVSNVAIFNPATQKADRVGVKTLEDGRKVRVFKSNGELVGA.

Belongs to the universal ribosomal protein uL24 family. Part of the 50S ribosomal subunit.

Its function is as follows. One of two assembly initiator proteins, it binds directly to the 5'-end of the 23S rRNA, where it nucleates assembly of the 50S subunit. Functionally, one of the proteins that surrounds the polypeptide exit tunnel on the outside of the subunit. The polypeptide is Large ribosomal subunit protein uL24 (Laribacter hongkongensis (strain HLHK9)).